Consider the following 92-residue polypeptide: Acylphosphatase (92 aa).

The cysteines at positions 5 and 49 are disulfide-linked. Residues 5–92 (CIIAWIYGRV…SGELTDFRIR (88 aa)) form the Acylphosphatase-like domain. Catalysis depends on residues Arg20 and Asn38.

This sequence belongs to the acylphosphatase family.

It carries out the reaction an acyl phosphate + H2O = a carboxylate + phosphate + H(+). The sequence is that of Acylphosphatase from Shigella boydii serotype 4 (strain Sb227).